We begin with the raw amino-acid sequence, 974 residues long: Collagen alpha-1(I) chain (974 aa).

Positions 1-14 (GISVPGPMGPSGPR) are enriched in low complexity. The segment at 1 to 974 (GISVPGPMGP…PGPPGPPGPP (974 aa)) is disordered. 10 positions are modified to 4-hydroxyproline: Pro-17, Pro-20, Pro-23, Pro-32, Pro-35, Pro-38, Pro-53, Pro-68, Pro-75, and Pro-81. A compositionally biased stretch (low complexity) spans 25–44 (PQGFQGPPGEPGEPGASGPM). Positions 56–73 (NGDDGEAGKPGRPGERRG) are enriched in basic and acidic residues. 5-hydroxylysine; alternate is present on Lys-84. Lys-84 carries an O-linked (Gal...) hydroxylysine; alternate glycan. Ser-90 carries the phosphoserine modification. A compositionally biased stretch (low complexity) spans 98-114 (DAGPAGPKGEPGSPGEN). 4-hydroxyproline occurs at positions 108, 111, 117, 126, 132, 153, 162, 165, 192, 195, 207, 213, 222, 228, 231, and 245. The span at 132 to 150 (PGASGPAGARGNDGATGAA) shows a compositional bias: low complexity. Pro residues predominate over residues 152-164 (PPGPTGPAGPPGF). Over residues 198–228 (AGAAGPAGNPGADGQPGAKGANGAPGIAGAP) the composition is skewed to low complexity. Lys-248 bears the 5-hydroxylysine mark. 4-hydroxyproline is present on residues Pro-254, Pro-257, Pro-269, Pro-278, Pro-293, Pro-299, Pro-308, and Pro-314. A compositionally biased stretch (gly residues) spans 303–312 (GERGGPGSRG). Lys-323 carries the post-translational modification 5-hydroxylysine. Pro-328, Pro-337, Pro-343, Pro-349, Pro-358, Pro-361, Pro-370, Pro-379, Pro-385, Pro-397, Pro-406, Pro-415, Pro-418, Pro-436, Pro-454, Pro-460, Pro-466, Pro-472, Pro-484, Pro-493, Pro-505, Pro-520, Pro-527, and Pro-536 each carry 4-hydroxyproline. The span at 352 to 378 (KGLTGSPGSPGPDGKTGPPGPAGQDGR) shows a compositional bias: low complexity. Residues 387–406 (ARGQAGVMGFPGPKGAAGEP) are compositionally biased toward low complexity. A compositionally biased stretch (low complexity) spans 504 to 517 (APGNDGAKGDAGAP). Residue Lys-548 is modified to 5-hydroxylysine. Pro-554, Pro-569, and Pro-575 each carry 4-hydroxyproline. Positions 581-595 (SGPSGPAGPTGARGA) are enriched in low complexity. Ser-584 carries the phosphoserine modification. 4-hydroxyproline is present on residues Pro-596, Pro-602, Pro-605, Pro-614, Pro-620, Pro-638, Pro-647, and Pro-656. Residues 608-635 (AGFAGPPGADGQPGAKGEPGDAGAKGDA) show a composition bias toward low complexity. The segment covering 637-649 (PPGPAGPTGPPGP) has biased composition (pro residues). Lys-659 carries the post-translational modification 5-hydroxylysine. Residues 664–680 (SAGPPGATGFPGAAGRV) are compositionally biased toward low complexity. 4-hydroxyproline is present on residues Pro-668 and Pro-674. 3-hydroxyproline is present on Pro-682. 4-hydroxyproline occurs at positions 683, 692, 695, 716, 725, 733, 742, 760, 769, 772, 778, 793, 799, 805, 814, and 820. Low complexity predominate over residues 709-718 (ETGPAGRPGE). Over residues 730–742 (KGSPGADGPAGAP) the composition is skewed to low complexity. A compositionally biased stretch (pro residues) spans 792-802 (PPGPVGPPGLA). Low complexity predominate over residues 804–826 (PPGESGREGSPGAEGSPGRDGSP). A compositionally biased stretch (pro residues) spans 828–844 (PKGPPGAPGAPGAPGPV). Lys-829 bears the 5-hydroxylysine mark. Residues Pro-832, Pro-835, and Pro-838 each carry the 4-hydroxyproline modification. Over residues 865 to 879 (AGPAGARGPAGPQGP) the composition is skewed to low complexity. Positions 880–894 (RGDKGETGEQGDRRG) are enriched in basic and acidic residues. Position 883 is a 5-hydroxylysine (Lys-883). Residues Pro-905, Pro-908, Pro-926, and Pro-941 each carry the 4-hydroxyproline modification. Low complexity predominate over residues 908–941 (PGEQGPSGASGPAGPRGPPGSAGSPGKDGLNGLP). Pro-946 bears the 3-hydroxyproline mark. Position 947 is a 4-hydroxyproline (Pro-947). Positions 959–974 (VGPPGPPGPPGPPGPP) are enriched in pro residues. At Pro-961 the chain carries 3-hydroxyproline. The residue at position 962 (Pro-962) is a 4-hydroxyproline. 3-hydroxyproline is present on Pro-964. Position 965 is a 4-hydroxyproline (Pro-965). Residue Pro-967 is modified to 3-hydroxyproline. Residues Pro-968, Pro-971, and Pro-974 each carry the 4-hydroxyproline modification.

It belongs to the fibrillar collagen family. In terms of assembly, trimers of one alpha 2(I) and two alpha 1(I) chains. Contains mostly 4-hydroxyproline. Proline residues at the third position of the tripeptide repeating unit (G-X-Y) are hydroxylated in some or all of the chains. In terms of processing, contains 3-hydroxyproline at a few sites. This modification occurs on the first proline residue in the sequence motif Gly-Pro-Hyp, where Hyp is 4-hydroxyproline. Post-translationally, lysine residues at the third position of the tripeptide repeating unit (G-X-Y) are 5-hydroxylated in some or all of the chains. O-glycosylated on hydroxylated lysine residues. The O-linked glycan consists of a Glc-Gal disaccharide. Expressed in bones.

It localises to the secreted. It is found in the extracellular space. The protein resides in the extracellular matrix. In terms of biological role, type I collagen is a member of group I collagen (fibrillar forming collagen). The protein is Collagen alpha-1(I) chain of Scelidodon sp. (strain SLP-2019) (South American ground sloth).